The sequence spans 311 residues: HPr kinase/phosphorylase (311 aa).

Catalysis depends on residues His-138 and Lys-159. 153–160 contributes to the ATP binding site; that stretch reads GSSGIGKS. A Mg(2+)-binding site is contributed by Ser-160. The active-site Proton acceptor; for phosphorylation activity. Proton donor; for dephosphorylation activity is Asp-177. The segment at 201 to 210 is important for the catalytic mechanism of both phosphorylation and dephosphorylation; that stretch reads LEIRGVGIIN. Residue Glu-202 coordinates Mg(2+). Arg-243 is a catalytic residue. Positions 264–269 are important for the catalytic mechanism of dephosphorylation; it reads PVRPGR.

Belongs to the HPrK/P family. As to quaternary structure, homohexamer. It depends on Mg(2+) as a cofactor.

The catalysed reaction is [HPr protein]-L-serine + ATP = [HPr protein]-O-phospho-L-serine + ADP + H(+). It catalyses the reaction [HPr protein]-O-phospho-L-serine + phosphate + H(+) = [HPr protein]-L-serine + diphosphate. In terms of biological role, catalyzes the ATP- as well as the pyrophosphate-dependent phosphorylation of a specific serine residue in HPr, a phosphocarrier protein of the phosphoenolpyruvate-dependent sugar phosphotransferase system (PTS). HprK/P also catalyzes the pyrophosphate-producing, inorganic phosphate-dependent dephosphorylation (phosphorolysis) of seryl-phosphorylated HPr (P-Ser-HPr). The two antagonistic activities of HprK/P are regulated by several intracellular metabolites, which change their concentration in response to the absence or presence of rapidly metabolisable carbon sources (glucose, fructose, etc.) in the growth medium. Therefore, by controlling the phosphorylation state of HPr, HPrK/P is a sensor enzyme that plays a major role in the regulation of carbon metabolism and sugar transport: it mediates carbon catabolite repression (CCR), and regulates PTS-catalyzed carbohydrate uptake and inducer exclusion. This chain is HPr kinase/phosphorylase, found in Brevibacillus brevis (strain 47 / JCM 6285 / NBRC 100599).